The following is a 305-amino-acid chain: Transmembrane protein 74 (305 aa).

Ser-11 is subject to Phosphoserine. Residues 122-132 (QRSQRSPSAKG) are compositionally biased toward polar residues. Residues 122–143 (QRSQRSPSAKGSNHPVDLGWGN) form a disordered region. Transmembrane regions (helical) follow at residues 178 to 198 (FISA…SYIV) and 232 to 252 (VIAG…LLMM).

The protein belongs to the TMEM74 family.

It is found in the lysosome membrane. The protein localises to the cytoplasmic vesicle. The protein resides in the autophagosome membrane. Plays an essential role in autophagy. TMEM74-induced autophagy may involve PI3K signal transduction. The protein is Transmembrane protein 74 (Tmem74) of Mus musculus (Mouse).